The following is a 115-amino-acid chain: MSNLITEITSEQLRTDHPDFRPGDTLSIHVKVVEGTRERIQVFEGVVIKRRGSGISETFTARKISYGVGVERTFPLHSPKIDKIEVKRYGKVRRAKLYYLRSLRGKKARIKEIRR.

It belongs to the bacterial ribosomal protein bL19 family.

This protein is located at the 30S-50S ribosomal subunit interface and may play a role in the structure and function of the aminoacyl-tRNA binding site. The polypeptide is Large ribosomal subunit protein bL19 (Shouchella clausii (strain KSM-K16) (Alkalihalobacillus clausii)).